Reading from the N-terminus, the 64-residue chain is Large ribosomal subunit protein uL29 (64 aa).

Belongs to the universal ribosomal protein uL29 family.

This chain is Large ribosomal subunit protein uL29, found in Burkholderia mallei (strain NCTC 10247).